Consider the following 126-residue polypeptide: 3-aminoacrylate deaminase RutC (126 aa).

Belongs to the RutC family.

The enzyme catalyses (Z)-3-aminoacrylate + H2O + H(+) = 3-oxopropanoate + NH4(+). In terms of biological role, involved in pyrimidine catabolism. Catalyzes the deamination of 3-aminoacrylate to malonic semialdehyde, a reaction that can also occur spontaneously. RutC may facilitate the reaction and modulate the metabolic fitness, rather than catalyzing essential functions. This is 3-aminoacrylate deaminase RutC from Acinetobacter baylyi (strain ATCC 33305 / BD413 / ADP1).